Reading from the N-terminus, the 209-residue chain is Imidazole glycerol phosphate synthase subunit HisH (209 aa).

The 205-residue stretch at 1–205 (MIAIIDYGMG…KGVVETWKSS (205 aa)) folds into the Glutamine amidotransferase type-1 domain. Catalysis depends on C79, which acts as the Nucleophile. Residues H180 and E182 contribute to the active site.

Heterodimer of HisH and HisF.

The protein localises to the cytoplasm. The enzyme catalyses 5-[(5-phospho-1-deoxy-D-ribulos-1-ylimino)methylamino]-1-(5-phospho-beta-D-ribosyl)imidazole-4-carboxamide + L-glutamine = D-erythro-1-(imidazol-4-yl)glycerol 3-phosphate + 5-amino-1-(5-phospho-beta-D-ribosyl)imidazole-4-carboxamide + L-glutamate + H(+). It carries out the reaction L-glutamine + H2O = L-glutamate + NH4(+). It functions in the pathway amino-acid biosynthesis; L-histidine biosynthesis; L-histidine from 5-phospho-alpha-D-ribose 1-diphosphate: step 5/9. IGPS catalyzes the conversion of PRFAR and glutamine to IGP, AICAR and glutamate. The HisH subunit catalyzes the hydrolysis of glutamine to glutamate and ammonia as part of the synthesis of IGP and AICAR. The resulting ammonia molecule is channeled to the active site of HisF. The sequence is that of Imidazole glycerol phosphate synthase subunit HisH from Bacillus cereus (strain AH187).